Consider the following 160-residue polypeptide: Lipoprotein signal peptidase (160 aa).

4 consecutive transmembrane segments (helical) span residues 7–27 (WFWL…YITV), 39–59 (LWPG…FSFF), 62–82 (GAVW…FLGW), and 96–116 (GFIL…GYVV). Catalysis depends on residues Asp117 and Asp133. A helical membrane pass occupies residues 126-146 (FPVFNLADTFINIGIFFLLLA).

The protein belongs to the peptidase A8 family.

The protein resides in the cell inner membrane. The catalysed reaction is Release of signal peptides from bacterial membrane prolipoproteins. Hydrolyzes -Xaa-Yaa-Zaa-|-(S,diacylglyceryl)Cys-, in which Xaa is hydrophobic (preferably Leu), and Yaa (Ala or Ser) and Zaa (Gly or Ala) have small, neutral side chains.. The protein operates within protein modification; lipoprotein biosynthesis (signal peptide cleavage). This protein specifically catalyzes the removal of signal peptides from prolipoproteins. The chain is Lipoprotein signal peptidase from Gloeothece citriformis (strain PCC 7424) (Cyanothece sp. (strain PCC 7424)).